A 112-amino-acid polypeptide reads, in one-letter code: MYCQRLRQLRKAHKLTMEQLAEKIGIAKSSYGGYEAESKKPPLDKLVILARLYDVSVDYILGLTDDPDPKVERKNLKEFLEKPDIHWDGYKLTPEILDPIRKILKLVTANNN.

The 55-residue stretch at 6-60 folds into the HTH cro/C1-type domain; sequence LRQLRKAHKLTMEQLAEKIGIAKSSYGGYEAESKKPPLDKLVILARLYDVSVDYI. A DNA-binding region (H-T-H motif) is located at residues 17–36; sequence MEQLAEKIGIAKSSYGGYEA.

This is an uncharacterized protein from Bacillus subtilis (strain 168).